A 334-amino-acid polypeptide reads, in one-letter code: Aspartate carbamoyltransferase catalytic subunit (334 aa).

2 residues coordinate carbamoyl phosphate: Arg-70 and Thr-71. Lys-98 lines the L-aspartate pocket. Arg-120, His-150, and Gln-153 together coordinate carbamoyl phosphate. Residues Arg-183 and Arg-238 each contribute to the L-aspartate site. Carbamoyl phosphate-binding residues include Gly-279 and Pro-280.

Belongs to the aspartate/ornithine carbamoyltransferase superfamily. ATCase family. Heterododecamer (2C3:3R2) of six catalytic PyrB chains organized as two trimers (C3), and six regulatory PyrI chains organized as three dimers (R2).

It carries out the reaction carbamoyl phosphate + L-aspartate = N-carbamoyl-L-aspartate + phosphate + H(+). Its pathway is pyrimidine metabolism; UMP biosynthesis via de novo pathway; (S)-dihydroorotate from bicarbonate: step 2/3. Its function is as follows. Catalyzes the condensation of carbamoyl phosphate and aspartate to form carbamoyl aspartate and inorganic phosphate, the committed step in the de novo pyrimidine nucleotide biosynthesis pathway. This Marinomonas sp. (strain MWYL1) protein is Aspartate carbamoyltransferase catalytic subunit.